A 278-amino-acid chain; its full sequence is Elongation factor Ts (278 aa).

The tract at residues T82 to V85 is involved in Mg(2+) ion dislocation from EF-Tu.

It belongs to the EF-Ts family.

Its subcellular location is the cytoplasm. Associates with the EF-Tu.GDP complex and induces the exchange of GDP to GTP. It remains bound to the aminoacyl-tRNA.EF-Tu.GTP complex up to the GTP hydrolysis stage on the ribosome. The protein is Elongation factor Ts of Streptomyces avermitilis (strain ATCC 31267 / DSM 46492 / JCM 5070 / NBRC 14893 / NCIMB 12804 / NRRL 8165 / MA-4680).